The sequence spans 112 residues: uncharacterized protein (112 aa).

Disordered regions lie at residues 1–53 (MSKL…QRLK) and 80–112 (MINQKRETKKRKRKQKKKNDDDYGVFEEDMLEL). The segment covering 8–22 (SALQKLIESQKNPNA) has biased composition (polar residues). Residues 86–96 (ETKKRKRKQKK) show a composition bias toward basic residues. Residues 101–112 (DYGVFEEDMLEL) show a composition bias toward acidic residues.

It localises to the nucleus. It is found in the nucleolus. This is an uncharacterized protein from Schizosaccharomyces pombe (strain 972 / ATCC 24843) (Fission yeast).